A 232-amino-acid polypeptide reads, in one-letter code: Large ribosomal subunit protein uL1 (232 aa).

The protein belongs to the universal ribosomal protein uL1 family. As to quaternary structure, part of the 50S ribosomal subunit.

Functionally, binds directly to 23S rRNA. The L1 stalk is quite mobile in the ribosome, and is involved in E site tRNA release. In terms of biological role, protein L1 is also a translational repressor protein, it controls the translation of the L11 operon by binding to its mRNA. This chain is Large ribosomal subunit protein uL1, found in Cereibacter sphaeroides (strain ATCC 17029 / ATH 2.4.9) (Rhodobacter sphaeroides).